The chain runs to 54 residues: Ovomucoid (54 aa).

Residues 4-54 enclose the Kazal-like domain; the sequence is VDCSGYPQSACPQDYVPFCGSDNKTYSNKCNFCNAVADSNGTLTLSHFGKC. Cystine bridges form between Cys-6/Cys-36, Cys-14/Cys-33, and Cys-22/Cys-54. An N-linked (GlcNAc...) asparagine glycan is attached at Asn-43.

It is found in the secreted. This Gallirallus australis (Weka) protein is Ovomucoid.